A 321-amino-acid chain; its full sequence is Fe-S cluster assembly protein DRE2 (321 aa).

Positions 1–161 are N-terminal SAM-like domain; it reads MPAPVPPTAF…STPVTLSGAR (161 aa). The disordered stretch occupies residues 123-168; the sequence is PSPSTLAYTSPSAPSLPTVASDPSPAPSSSTPVTLSGARPLQLRRN. Residues 139–156 are compositionally biased toward low complexity; it reads PTVASDPSPAPSSSTPVT. The segment at 162-197 is linker; it reads PLQLRRNGDKARKAALWAIDSPLIPDGGKSLLTPAD. C203, C219, C222, and C224 together coordinate [2Fe-2S] cluster. The fe-S binding site A stretch occupies residues 203-224; the sequence is CVFPAENGKPVKRRRACKDCTC. The [4Fe-4S] cluster site is built by C285, C288, C296, and C299. 2 consecutive short sequence motifs (cx2C motif) follow at residues 285–288 and 296–299; these read CGSC and CSSC. Residues 285–299 are fe-S binding site B; it reads CGSCYLGDAFRCSSC.

It belongs to the anamorsin family. Monomer. Interacts with TAH18. Interacts with MIA40. The cofactor is [2Fe-2S] cluster. Requires [4Fe-4S] cluster as cofactor.

It localises to the cytoplasm. It is found in the mitochondrion intermembrane space. In terms of biological role, component of the cytosolic iron-sulfur (Fe-S) protein assembly (CIA) machinery required for the maturation of extramitochondrial Fe-S proteins. Part of an electron transfer chain functioning in an early step of cytosolic Fe-S biogenesis, facilitating the de novo assembly of a [4Fe-4S] cluster on the scaffold complex CFD1-NBP35. Electrons are transferred to DRE2 from NADPH via the FAD- and FMN-containing protein TAH18. TAH18-DRE2 are also required for the assembly of the diferric tyrosyl radical cofactor of ribonucleotide reductase (RNR), probably by providing electrons for reduction during radical cofactor maturation in the catalytic small subunit RNR2. The chain is Fe-S cluster assembly protein DRE2 from Cryptococcus neoformans var. neoformans serotype D (strain B-3501A) (Filobasidiella neoformans).